We begin with the raw amino-acid sequence, 108 residues long: DNA-directed RNA polymerase III subunit RPC10 (108 aa).

The Zn(2+) site is built by cysteine 5, cysteine 8, cysteine 25, cysteine 28, cysteine 69, and cysteine 72. Residues 5 to 28 (CPGCGNGLIVEEGQRCHRFACNTC) form a C4-type zinc finger. The TFIIS-type zinc-finger motif lies at 65 to 107 (TAESCPKCEHPRAYFMQLQTRSADEPMTTFYKCCNAQCGHRWR). The Hairpin motif lies at 88–89 (DE). Zn(2+) is bound by residues cysteine 98 and cysteine 102.

It belongs to the archaeal RpoM/eukaryotic RPA12/RPB9/RPC11 RNA polymerase family. In terms of assembly, component of the RNA polymerase III complex consisting of 17 subunits: a ten-subunit horseshoe-shaped catalytic core composed of POLR3A/RPC1, POLR3B/RPC2, POLR1C/RPAC1, POLR1D/RPAC2, POLR3K/RPC10, POLR2E/RPABC1, POLR2F/RPABC2, POLR2H/RPABC3, POLR2K/RPABC4 and POLR2L/RPABC5; a mobile stalk composed of two subunits POLR3H/RPC8 and CRCP/RPC9, protruding from the core and functioning primarily in transcription initiation; and additional subunits homologous to general transcription factors of the RNA polymerase II machinery, POLR3C/RPC3-POLR3F/RPC6-POLR3G/RPC7 heterotrimer required for transcription initiation and POLR3D/RPC4-POLR3E/RPC5 heterodimer involved in both transcription initiation and termination.

Its subcellular location is the nucleus. Its function is as follows. Core component of RNA polymerase III (Pol III) which synthesizes small non-coding RNAs using the four ribonucleoside triphosphates as substrates. Can mediate Pol I proofreading of the nascent RNA transcript. Anchors into the Pol III active site to constantly monitor transcription fidelity, cleaves mis-incorporated 5'-ribonucleotides and restarts the transcription process. Once Pol III reaches the poly(dT) termination signal, can induce Pol III clamp opening and transcription termination. Pol III plays an important role in sensing and limiting infection by intracellular bacteria and DNA viruses. Acts as a nuclear and cytosolic DNA sensor involved in innate immune response. Can sense non-self dsDNA that serves as template for transcription into dsRNA. The non-self RNA polymerase III transcripts, such as Epstein-Barr virus-encoded RNAs (EBERs) induce type I interferon and NF-kappa-B through the RIG-I pathway. This Homo sapiens (Human) protein is DNA-directed RNA polymerase III subunit RPC10.